The following is a 319-amino-acid chain: Acetyl-coenzyme A carboxylase carboxyl transferase subunit alpha (319 aa).

Residues 32 to 293 (NVETEVRALR…KAVLLNELDA (262 aa)) form the CoA carboxyltransferase C-terminal domain.

The protein belongs to the AccA family. In terms of assembly, acetyl-CoA carboxylase is a heterohexamer composed of biotin carboxyl carrier protein (AccB), biotin carboxylase (AccC) and two subunits each of ACCase subunit alpha (AccA) and ACCase subunit beta (AccD).

It is found in the cytoplasm. The catalysed reaction is N(6)-carboxybiotinyl-L-lysyl-[protein] + acetyl-CoA = N(6)-biotinyl-L-lysyl-[protein] + malonyl-CoA. Its pathway is lipid metabolism; malonyl-CoA biosynthesis; malonyl-CoA from acetyl-CoA: step 1/1. Its function is as follows. Component of the acetyl coenzyme A carboxylase (ACC) complex. First, biotin carboxylase catalyzes the carboxylation of biotin on its carrier protein (BCCP) and then the CO(2) group is transferred by the carboxyltransferase to acetyl-CoA to form malonyl-CoA. In Xanthomonas oryzae pv. oryzae (strain MAFF 311018), this protein is Acetyl-coenzyme A carboxylase carboxyl transferase subunit alpha.